Here is a 544-residue protein sequence, read N- to C-terminus: Serine/threonine-protein kinase bur1 (544 aa).

Residues 25 to 326 form the Protein kinase domain; the sequence is FEFLGKLGEG…AIDALKHPYF (302 aa). Residues 31–39 and Lys-54 contribute to the ATP site; that span reads LGEGTFGEV. Residue Asp-155 is the Proton acceptor of the active site. Residues 357–544 are disordered; the sequence is AAMPPAPAGG…ERVDRGPYRR (188 aa). Polar residues predominate over residues 374-403; that stretch reads GGWSTNSGSRTGAETRNPRISSAARSQGNQ. 4 stretches are compositionally biased toward basic and acidic residues: residues 419 to 438, 456 to 466, 488 to 511, and 532 to 544; these read RGNE…HRDG, HSDKTGRDRGY, DRNR…DKSH, and NYRE…PYRR.

The protein belongs to the protein kinase superfamily. CMGC Ser/Thr protein kinase family. CDC2/CDKX subfamily.

It is found in the nucleus. The enzyme catalyses L-seryl-[protein] + ATP = O-phospho-L-seryl-[protein] + ADP + H(+). It catalyses the reaction L-threonyl-[protein] + ATP = O-phospho-L-threonyl-[protein] + ADP + H(+). It carries out the reaction [DNA-directed RNA polymerase] + ATP = phospho-[DNA-directed RNA polymerase] + ADP + H(+). In terms of biological role, serine/threonine-protein kinase involved in transcription regulation. Phosphorylates the UBC2/RAD6 ubiquitin-conjugating enzyme (E2), leading to monoubiquitination of histone H2B and the silencing of telomeric-associated genes. Also required for histone H3 methylation. Necessary for the recovery from pheromone-induced growth arrest in the cell cycle G1 phase. In Emericella nidulans (strain FGSC A4 / ATCC 38163 / CBS 112.46 / NRRL 194 / M139) (Aspergillus nidulans), this protein is Serine/threonine-protein kinase bur1 (ptkA).